Reading from the N-terminus, the 195-residue chain is DnaJ homolog subfamily C member 5 (195 aa).

The J domain maps to 13-82 (GDSLYIVLGL…RNIYDKYGSL (70 aa)). Residues 162-195 (DMEKEGDGAIVVQPTSATETTQLTSDSHPSYHTE) form a disordered region. A compositionally biased stretch (polar residues) spans 174–189 (QPTSATETTQLTSDSH).

In terms of processing, palmitoylated. Palmitoylation occurs probably in the cysteine-rich domain and regulates DNAJC5 stable membrane attachment.

The protein resides in the cytoplasm. The protein localises to the cytosol. It localises to the membrane. Its subcellular location is the cytoplasmic vesicle. It is found in the secretory vesicle. The protein resides in the chromaffin granule membrane. The protein localises to the melanosome. It localises to the cell membrane. In terms of biological role, may have an important role in presynaptic function. May be involved in calcium-dependent neurotransmitter release at nerve endings. The sequence is that of DnaJ homolog subfamily C member 5 from Tetronarce californica (Pacific electric ray).